We begin with the raw amino-acid sequence, 363 residues long: Mitogen-activated protein kinase kinase 2 (363 aa).

Ser56 bears the Phosphoserine mark. In terms of domain architecture, Protein kinase spans 70–330; that stretch reads LDMVKVIGKG…AKELMEHPFL (261 aa). ATP contacts are provided by residues 76–84 and Lys99; that span reads IGKGSSGVV. Catalysis depends on Asp192, which acts as the Proton acceptor. A phosphothreonine mark is found at Thr220, Thr226, and Thr230.

It belongs to the protein kinase superfamily. STE Ser/Thr protein kinase family. MAP kinase kinase subfamily. As to quaternary structure, interacts with MEKK1, MPK4 and MPK6. May form a ternary complex composed of MEKK1 and MKK1/MKK2 and MPK4. Interacts with MPK10 and MPK11. Interacts with MAPKKK5 mainly in the cytosol. Post-translationally, phosphorylation at Thr-220 and Thr-226 by MAP kinase kinase kinases positively regulates kinase activity. Phosphorylated by MEKK1 in response to cold. Phosphorylated by MAPKKK5.

The catalysed reaction is L-seryl-[protein] + ATP = O-phospho-L-seryl-[protein] + ADP + H(+). It carries out the reaction L-threonyl-[protein] + ATP = O-phospho-L-threonyl-[protein] + ADP + H(+). The enzyme catalyses L-tyrosyl-[protein] + ATP = O-phospho-L-tyrosyl-[protein] + ADP + H(+). Activated in response to cold and salt stresses through serine and threonine phosphorylation by MEKK1. Functionally, MEKK1, MKK1/MKK2 and MPK4 function in a signaling pathway that modulates the expression of genes responding to biotic and abiotic stresses and also plays an important role in pathogen defense by negatively regulating innate immunity. Plays a role in abiotic stress tolerance and plant disease resistance through activation of MPK4 and MPK6 by phosphorylation. Acts redundantly with MKK1. The chain is Mitogen-activated protein kinase kinase 2 (MKK2) from Arabidopsis thaliana (Mouse-ear cress).